A 292-amino-acid polypeptide reads, in one-letter code: MRQIAFYGKGGIGKSTTCQNTVAGMAELGQRIMIVGCDPKADSTRLMLHCKAQTTVLHLAAERGSVEDVELEEVVLTGYRGVRCVESGGPEPGVGCAGRGIITAINFLEENGAYEDLDFVCYDVLGDVVCGGFAMPIREGKAQEIYIVCSGEMMAMYAANNIARGVLKYAYSGGVRLGGLICNSRKVDREIELIEALAEKLNTKMLHFIPRDNVVQHAELRRMTVIEYSPDCNQADEYRALAKKIINNTDLRIPTPISMDELEQLLIEFGVLDDDQKIAHLIGKTEKELAPV.

8–15 (GKGGIGKS) is a binding site for ATP. C96 is a binding site for [4Fe-4S] cluster. ADP-ribosylarginine; by dinitrogenase reductase ADP-ribosyltransferase is present on R99. [4Fe-4S] cluster is bound at residue C130.

This sequence belongs to the NifH/BchL/ChlL family. As to quaternary structure, homodimer. The cofactor is [4Fe-4S] cluster. Post-translationally, the reversible ADP-ribosylation of Arg-99 inactivates the nitrogenase reductase and regulates nitrogenase activity.

The catalysed reaction is N2 + 8 reduced [2Fe-2S]-[ferredoxin] + 16 ATP + 16 H2O = H2 + 8 oxidized [2Fe-2S]-[ferredoxin] + 2 NH4(+) + 16 ADP + 16 phosphate + 6 H(+). Its function is as follows. The key enzymatic reactions in nitrogen fixation are catalyzed by the nitrogenase complex, which has 2 components: the iron protein and the molybdenum-iron protein. In Synechococcus sp. (strain JA-3-3Ab) (Cyanobacteria bacterium Yellowstone A-Prime), this protein is Nitrogenase iron protein.